The primary structure comprises 273 residues: DnaJ homolog subfamily C member 27 (273 aa).

The interval 1–18 is required for interaction with MAPK1; the sequence is MEASMPKRKEPGKSLRIK. GTP contacts are provided by residues 23-30, 71-75, and 134-137; these read GNAEVGKS, DMAGD, and NKID. Residues 217-273 form the J domain; that stretch reads DSWDMLGVKPGASRDEVNKAYRKLAVLLHPDKCVAPGSEDAFKAVVNARTALLKNIK.

The protein belongs to the small GTPase superfamily. Rab family. As to quaternary structure, interacts directly with MAPK1 (wild-type and kinase-deficient forms). Interacts directly (in GTP-bound form) with MAP2K1 (wild-type and kinase-deficient forms).

It localises to the nucleus. In terms of biological role, GTPase which can activate the MEK/ERK pathway and induce cell transformation when overexpressed. May act as a nuclear scaffold for MAPK1, probably by association with MAPK1 nuclear export signal leading to enhanced ERK1/ERK2 signaling. The sequence is that of DnaJ homolog subfamily C member 27 (DNAJC27) from Bos taurus (Bovine).